The sequence spans 413 residues: uncharacterized protein (413 aa).

Helical transmembrane passes span 10–32 (GLTI…GRLP), 162–184 (VFLH…LVFL), 189–211 (LLPR…AFLV), 232–254 (LSFR…LFFF), 259–276 (YSYS…ILLV), 288–310 (ALMV…SFVT), and 325–347 (FAYA…SLIL).

It is found in the cell membrane. This is an uncharacterized protein from Aquifex aeolicus (strain VF5).